The following is a 287-amino-acid chain: UPF0276 protein ACIAD0933 (287 aa).

The protein belongs to the UPF0276 family.

This Acinetobacter baylyi (strain ATCC 33305 / BD413 / ADP1) protein is UPF0276 protein ACIAD0933.